The following is a 285-amino-acid chain: 1-acyl-sn-glycerol-3-phosphate acyltransferase alpha (285 aa).

The first 28 residues, methionine 1 to serine 28, serve as a signal peptide directing secretion. Residues alanine 29–lysine 34 lie on the Lumenal side of the membrane. A helical membrane pass occupies residues methionine 35–valine 55. Over arginine 56–arginine 124 the chain is Cytoplasmic. The HXXXXD motif motif lies at histidine 101 to aspartate 106. A helical transmembrane segment spans residues glutamate 125–aspartate 145. The Lumenal portion of the chain corresponds to arginine 146–arginine 189. The short motif at glutamate 175–arginine 178 is the EGTR motif element.

This sequence belongs to the 1-acyl-sn-glycerol-3-phosphate acyltransferase family. Widely expressed.

It is found in the endoplasmic reticulum membrane. It catalyses the reaction a 1-acyl-sn-glycero-3-phosphate + an acyl-CoA = a 1,2-diacyl-sn-glycero-3-phosphate + CoA. The enzyme catalyses 1-(9Z-octadecenoyl)-sn-glycero-3-phosphate + (9Z)-octadecenoyl-CoA = 1,2-di-(9Z-octadecenoyl)-sn-glycero-3-phosphate + CoA. It carries out the reaction 1-(9Z-octadecenoyl)-sn-glycero-3-phosphate + hexadecanoyl-CoA = 1-(9Z)-octadecenoyl-2-hexadecanoyl-sn-glycero-3-phosphate + CoA. The catalysed reaction is heptadecanoyl-CoA + 1-(9Z-octadecenoyl)-sn-glycero-3-phosphate = 1-(9Z)-octadecenoyl-2-heptadecanoyl-sn-glycero-3-phosphate + CoA. It catalyses the reaction 1-(9Z-octadecenoyl)-sn-glycero-3-phosphate + octadecanoyl-CoA = 1-(9Z-octadecenoyl)-2-octadecanoyl-sn-glycero-3-phosphate + CoA. The enzyme catalyses 1-(9Z-octadecenoyl)-sn-glycero-3-phosphate + (9Z,12Z)-octadecadienoyl-CoA = 1-(9Z)-octadecenoyl-2-(9Z,12Z)-octadecadienoyl-sn-glycero-3-phosphate + CoA. It carries out the reaction 1-(9Z-octadecenoyl)-sn-glycero-3-phosphate + tetradecanoyl-CoA = 1-(9Z)-octadecenoyl-2-tetradecanoyl-sn-glycero-3-phosphate + CoA. The catalysed reaction is pentadecanoyl-CoA + 1-(9Z-octadecenoyl)-sn-glycero-3-phosphate = 1-(9Z)-octadecenoyl-2-pentadecanoyl-sn-glycero-3-phosphate + CoA. It catalyses the reaction 1-hexadecanoyl-sn-glycero-3-phosphate + (9Z)-octadecenoyl-CoA = 1-hexadecanoyl-2-(9Z-octadecenoyl)-sn-glycero-3-phosphate + CoA. The enzyme catalyses 1-(9Z,12Z,15Z)-octadecatrienoyl-sn-glycero-3-phosphate + (9Z)-octadecenoyl-CoA = 1-(9Z,12Z,15Z)-octadecatrienoyl-2-(9Z)-octadecenoyl-sn-glycero-3-phosphate + CoA. It carries out the reaction 1-(6Z,9Z,12Z-octadecatrienoyl)-sn-glycero-3-phosphate + (9Z)-octadecenoyl-CoA = (6Z,9Z,12Z)-octadecatrienoyl-2-(9Z)-octadecenoyl-sn-glycero-3-phosphate + CoA. The catalysed reaction is 1-eicosanoyl-sn-glycero-3-phosphate + (9Z)-octadecenoyl-CoA = 1-eicosanoyl-2-(9Z)-octadecenoyl-sn-glycero-3-phosphate + CoA. It catalyses the reaction 1-tetradecanoyl-sn-glycerol 3-phosphate + (9Z)-octadecenoyl-CoA = 1-tetradecanoyl-2-(9Z)-octadecenoyl-sn-glycero-3-phosphate + CoA. The enzyme catalyses 1-(9Z-octadecenoyl)-sn-glycero-3-phosphate + (5Z,8Z,11Z,14Z)-eicosatetraenoyl-CoA = 1-(9Z)-octadecenoyl-2-(5Z,8Z,11Z,14Z)-eicosatetraenoyl-sn-glycero-3-phosphate + CoA. It carries out the reaction 1-(9Z-octadecenoyl)-sn-glycero-3-phosphate + dodecanoyl-CoA = 1-(9Z)-octadecenoyl-2-dodecanoyl-sn-glycero-3-phosphate + CoA. The catalysed reaction is (6Z)-octadecenoyl-CoA + 1-(9Z-octadecenoyl)-sn-glycero-3-phosphate = 1-(9Z)-octadecenoyl-2-(6Z)-octadecenoyl-sn-glycero-3-phosphate + CoA. It catalyses the reaction (11Z)-octadecenoyl-CoA + 1-(9Z-octadecenoyl)-sn-glycero-3-phosphate = 1-(9Z)-octadecenoyl-2-(11Z)-octadecenoyl-sn-glycero-3-phosphate + CoA. The enzyme catalyses (9Z)-hexadecenoyl-CoA + 1-(9Z-octadecenoyl)-sn-glycero-3-phosphate = 1-(9Z-octadecenoyl)-2-(9Z-hexadecenoyl)-sn-glycero-3-phosphate + CoA. The protein operates within phospholipid metabolism; CDP-diacylglycerol biosynthesis; CDP-diacylglycerol from sn-glycerol 3-phosphate: step 2/3. Functionally, converts 1-acyl-sn-glycerol-3-phosphate (lysophosphatidic acid or LPA) into 1,2-diacyl-sn-glycerol-3-phosphate (phosphatidic acid or PA) by incorporating an acyl moiety at the sn-2 position of the glycerol backbone. This Mus musculus (Mouse) protein is 1-acyl-sn-glycerol-3-phosphate acyltransferase alpha (Agpat1).